A 305-amino-acid chain; its full sequence is Olfactory receptor 9G19 (305 aa).

Residues M1 to K24 are Extracellular-facing. Residues V25–I45 form a helical membrane-spanning segment. Over M46–H55 the chain is Cytoplasmic. A helical membrane pass occupies residues T56 to Y76. The Extracellular portion of the chain corresponds to T77–C96. The cysteines at positions 96 and 178 are disulfide-linked. A helical transmembrane segment spans residues V97–M117. Residues A118–K138 lie on the Cytoplasmic side of the membrane. Residues L139–T159 traverse the membrane as a helical segment. At K160–S204 the chain is on the extracellular side. A helical membrane pass occupies residues N205 to L225. The Cytoplasmic portion of the chain corresponds to R226–A236. The chain crosses the membrane as a helical span at residues F237–I257. Topologically, residues Y258 to D270 are extracellular. A helical transmembrane segment spans residues K271–L291. Residues R292–K305 lie on the Cytoplasmic side of the membrane.

It belongs to the G-protein coupled receptor 1 family.

The protein resides in the cell membrane. Odorant receptor. This chain is Olfactory receptor 9G19, found in Mus musculus (Mouse).